The sequence spans 175 residues: MGTVNVVRVASRHKLSWYEKFYFYSIGKGLWITLKHFIKAAILRKAVTIEFPEKKRKYSTRFRGMHTMKRDEQGRERCTSCFCCMWICPADAIYIEAAEVTPEIQHLHPEDKYAKKFEIDLLRCIFCGMCEEACPKGAIYLDGPGEMATDNREDLILTKERMMQLVGGPIIGERQ.

2 4Fe-4S ferredoxin-type domains span residues Lys-69–Ala-98 and Lys-115–Pro-144. The [4Fe-4S] cluster site is built by Cys-78, Cys-81, Cys-84, Cys-88, Cys-124, Cys-127, Cys-130, and Cys-134.

The protein belongs to the complex I 23 kDa subunit family. In terms of assembly, NDH-1 is composed of 14 different subunits. Subunits NuoA, H, J, K, L, M, N constitute the membrane sector of the complex. It depends on [4Fe-4S] cluster as a cofactor.

The protein localises to the cell inner membrane. It catalyses the reaction a quinone + NADH + 5 H(+)(in) = a quinol + NAD(+) + 4 H(+)(out). In terms of biological role, NDH-1 shuttles electrons from NADH, via FMN and iron-sulfur (Fe-S) centers, to quinones in the respiratory chain. The immediate electron acceptor for the enzyme in this species is believed to be ubiquinone. Couples the redox reaction to proton translocation (for every two electrons transferred, four hydrogen ions are translocated across the cytoplasmic membrane), and thus conserves the redox energy in a proton gradient. This is NADH-quinone oxidoreductase subunit I from Leptospira interrogans serogroup Icterohaemorrhagiae serovar Lai (strain 56601).